Here is a 365-residue protein sequence, read N- to C-terminus: Magnesium-chelatase subunit ChlI (365 aa).

Gly-54–Ser-61 provides a ligand contact to ATP.

The protein belongs to the Mg-chelatase subunits D/I family.

Its subcellular location is the plastid. It is found in the chloroplast. The enzyme catalyses protoporphyrin IX + Mg(2+) + ATP + H2O = Mg-protoporphyrin IX + ADP + phosphate + 3 H(+). The protein operates within porphyrin-containing compound metabolism; chlorophyll biosynthesis. In terms of biological role, involved in chlorophyll biosynthesis; introduces a magnesium ion into protoporphyrin IX to yield Mg-protoporphyrin IX. The protein is Magnesium-chelatase subunit ChlI (chlI) of Bigelowiella natans (Pedinomonas minutissima).